The primary structure comprises 302 residues: Probable E3 ubiquitin-protein ligase RZFP34 (302 aa).

Residues 54 to 130 (EGIMQYGCAH…VRQVCISCGV (77 aa)) form a CHY-type zinc finger. C61, H63, C74, C75, C81, C84, H85, H100, C112, C115, C125, C128, C137, C140, H153, C154, C157, C160, H170, C171, C174, C177, H186, and C188 together coordinate Zn(2+). A CTCHY-type zinc finger spans residues 132-196 (MGKYFCEVCK…ACVEGAMHHD (65 aa)). The segment at 197-240 (CPICFEYLFESTNDVSVLPCGHTIHVKCLREMEEHCQFACPLCS) adopts an RING-type; atypical zinc-finger fold.

Its subcellular location is the nucleus. The catalysed reaction is S-ubiquitinyl-[E2 ubiquitin-conjugating enzyme]-L-cysteine + [acceptor protein]-L-lysine = [E2 ubiquitin-conjugating enzyme]-L-cysteine + N(6)-ubiquitinyl-[acceptor protein]-L-lysine.. It functions in the pathway protein modification; protein ubiquitination. Its function is as follows. Possesses transactivation activity in yeast cells. Involved in the regulation of stomatal aperture. May modulate the expression of genes that control stomata opening during heat shock or drought stress. The protein is Probable E3 ubiquitin-protein ligase RZFP34 of Oryza sativa subsp. japonica (Rice).